Reading from the N-terminus, the 67-residue chain is Conotoxin Im3.1 (67 aa).

The N-terminal stretch at 1 to 20 (MMSTLVVLLTICLLMLPLTA) is a signal peptide. Residues 21-52 (RQLDADQLADQLAERMEDISADQNRWFDPVKR) constitute a propeptide that is removed on maturation. Cystine bridges form between C53/C63, C54/C61, and C59/C64.

The protein belongs to the conotoxin M superfamily. Expressed by the venom duct.

It localises to the secreted. In terms of biological role, probable neurotoxin. The sequence is that of Conotoxin Im3.1 from Conus imperialis (Imperial cone).